We begin with the raw amino-acid sequence, 873 residues long: Leucine--tRNA ligase (873 aa).

The short motif at 42–52 (PYPSGKLHMGH) is the 'HIGH' region element. Residues 624 to 643 (PVEIGGTEKMSKSKNNGVDP) are disordered. The short motif at 632-636 (KMSKS) is the 'KMSKS' region element. ATP is bound at residue lysine 635.

The protein belongs to the class-I aminoacyl-tRNA synthetase family.

Its subcellular location is the cytoplasm. It catalyses the reaction tRNA(Leu) + L-leucine + ATP = L-leucyl-tRNA(Leu) + AMP + diphosphate. This chain is Leucine--tRNA ligase, found in Pseudomonas aeruginosa (strain LESB58).